The following is a 639-amino-acid chain: Chaperone protein DnaK (639 aa).

Thr197 is modified (phosphothreonine; by autocatalysis). The disordered stretch occupies residues 600 to 639; that stretch reads SGAQGGAQAGPDMNAGQSNAGQNNGKQDDNVQDADFEEVK. Residues 613-624 are compositionally biased toward low complexity; it reads NAGQSNAGQNNG. The segment covering 629–639 has biased composition (acidic residues); sequence NVQDADFEEVK.

This sequence belongs to the heat shock protein 70 family.

Functionally, acts as a chaperone. The polypeptide is Chaperone protein DnaK (Bacteroides fragilis (strain ATCC 25285 / DSM 2151 / CCUG 4856 / JCM 11019 / LMG 10263 / NCTC 9343 / Onslow / VPI 2553 / EN-2)).